The following is a 424-amino-acid chain: MNKKPSKYFPSLNRTDYKNCNFLCNGFSLKPNEKKSSKNASMASKLLTTFFLIFFVLDIDLVATSMTSVSSAVEVLSDSGYLSMGLTLKLANQDLNLEDWQELTLFAPSDQSFSKFGQPSLLDMKYQLSPTRLPGETLRNLPNGAKIPTLRSNYSLTVTNSSRFGGKTSINNVVVQDSPVFDDGYVVIYGSDEFFTSPTKISDDSSSSSSIPSTTSSTGSIPIPSSATQTPPSPNIASDSTRNLPNRSKPVNRFNIFESASRLLMSRGFVIIATFLALQLEDNTSGNDTKITVFAPIDEAIPNPTTKFSDYVTIFRGHVVSQLLLWKDLQKFAKEGSILQTVLKGYEIEISLSGDILLLNGVPLIYPDLYVNDWIAVHGFNQMIVTKEKQVDVGDSITVLNNGEQEEEGVHGEYSSELGDYGLH.

The chain crosses the membrane as a helical span at residues 46-66 (LLTTFFLIFFVLDIDLVATSM). The region spanning 56 to 194 (VLDIDLVATS…YVVIYGSDEF (139 aa)) is the FAS1 1 domain. Asn153 and Asn160 each carry an N-linked (GlcNAc...) asparagine glycan. The span at 199-226 (TKISDDSSSSSSIPSTTSSTGSIPIPSS) shows a compositional bias: low complexity. Positions 199-246 (TKISDDSSSSSSIPSTTSSTGSIPIPSSATQTPPSPNIASDSTRNLPN) are disordered. The segment covering 227-246 (ATQTPPSPNIASDSTRNLPN) has biased composition (polar residues). Asn246, Asn283, and Asn287 each carry an N-linked (GlcNAc...) asparagine glycan. Positions 250 to 384 (PVNRFNIFES…IAVHGFNQMI (135 aa)) constitute an FAS1 2 domain. The segment at 405–424 (QEEEGVHGEYSSELGDYGLH) is disordered.

Belongs to the fasciclin-like AGP family.

It is found in the membrane. Its function is as follows. May be a cell surface adhesion protein. This chain is Putative fasciclin-like arabinogalactan protein 20 (FLA20), found in Arabidopsis thaliana (Mouse-ear cress).